A 454-amino-acid polypeptide reads, in one-letter code: Inner membrane permease YgbN (454 aa).

Position 1 (methionine 1) is a topological domain, periplasmic. Residues 2–22 (STITLLCIALAGVIMLLLLVI) form a helical membrane-spanning segment. The Cytoplasmic segment spans residues 23-27 (KAKVQ). A helical transmembrane segment spans residues 28–48 (PFVALLLVSLLVALAAGIPAG). Residues 49–52 (EVGK) are Periplasmic-facing. The helical transmembrane segment at 53 to 73 (VMIAGMGGVLGSVTIIIGLGA) threads the bilayer. At 74 to 108 (MLGRMIEHSGGAESLANYFSRKLGDKRTIAALTLA) the chain is on the cytoplasmic side. A helical transmembrane segment spans residues 109–129 (AFFLGIPVFFDVGFIILAPII). The Periplasmic segment spans residues 130-137 (YGFAKVAK). A helical transmembrane segment spans residues 138–158 (ISPLKFGLPVAGIMLTVHVAV). At 159–174 (PPHPGPVAAAGLLHAD) the chain is on the cytoplasmic side. The helical transmembrane segment at 175 to 195 (IGWLTIIGIAISIPVGVVGYF) threads the bilayer. The Periplasmic segment spans residues 196–235 (AAKIINKRQYAMSVEVLEQMQLAPASEEGATKLSDKINPP). A helical membrane pass occupies residues 236 to 256 (GVALVTSLIVIPIAIIMAGTV). At 257–273 (SATLMPPSHPLLGTLQL) the chain is on the cytoplasmic side. Residues 274-294 (IGSPMVALMIALVLAFWLLAL) traverse the membrane as a helical segment. At 295 to 305 (RRGWSLQHTSD) the chain is on the periplasmic side. A helical transmembrane segment spans residues 306 to 326 (IMGSALPTAAVVILVTGAGGV). The Cytoplasmic portion of the chain corresponds to 327 to 341 (FGKVLVESGVGKALA). A helical transmembrane segment spans residues 342-362 (NMLQMIDLPLLPAAFIISLAL). The Periplasmic segment spans residues 363-383 (RASQGSATVAILTTGGLLSEA). A helical membrane pass occupies residues 384 to 404 (VMGLNPIQCVLVTLAACFGGL). Residues 405-433 (GASHINDSGFWIVTKYLGLSVADGLKTWT) are Cytoplasmic-facing. Residues 434–454 (VLTTILGFTGFLITWCVWAVI) form a helical membrane-spanning segment.

Belongs to the GntP permease family.

It localises to the cell inner membrane. The chain is Inner membrane permease YgbN (ygbN) from Escherichia coli (strain K12).